The chain runs to 81 residues: Dermaseptin-B7 (81 aa).

An N-terminal signal peptide occupies residues 1-22; it reads MASLKKSLFLVLFLGLVSLSIC. Residues 23–44 constitute a propeptide that is removed on maturation; that stretch reads EEEKRENEDEEEQEDDEQSEMK. Residues 24 to 48 form a disordered region; the sequence is EEKRENEDEEEQEDDEQSEMKRGLW. The segment covering 30–40 has biased composition (acidic residues); the sequence is EDEEEQEDDEQ. Val-78 is subject to Valine amide. Positions 80 to 81 are excised as a propeptide; that stretch reads EQ.

Belongs to the frog skin active peptide (FSAP) family. Dermaseptin subfamily. Expressed by the skin glands.

The protein resides in the secreted. In terms of biological role, has antimicrobial activity. The chain is Dermaseptin-B7 (DRG1) from Phyllomedusa bicolor (Two-colored leaf frog).